The primary structure comprises 403 residues: Acetate kinase (403 aa).

Residue Asn-8 coordinates Mg(2+). Lys-15 contacts ATP. Arg-90 lines the substrate pocket. Catalysis depends on Asp-147, which acts as the Proton donor/acceptor. ATP-binding positions include 207 to 211 (HLGSG), 282 to 284 (DLR), and 330 to 334 (GVGEN). Glu-384 is a binding site for Mg(2+).

The protein belongs to the acetokinase family. In terms of assembly, homodimer. Mg(2+) serves as cofactor. The cofactor is Mn(2+).

It is found in the cytoplasm. The catalysed reaction is acetate + ATP = acetyl phosphate + ADP. It participates in metabolic intermediate biosynthesis; acetyl-CoA biosynthesis; acetyl-CoA from acetate: step 1/2. Catalyzes the formation of acetyl phosphate from acetate and ATP. Can also catalyze the reverse reaction. This is Acetate kinase from Exiguobacterium sp. (strain ATCC BAA-1283 / AT1b).